Here is a 234-residue protein sequence, read N- to C-terminus: UPF0758 protein Smlt0399 (234 aa).

The MPN domain occupies Val-103–Leu-225. Positions 174, 176, and 187 each coordinate Zn(2+). The JAMM motif signature appears at His-174 to Asp-187.

This sequence belongs to the UPF0758 family.

The protein is UPF0758 protein Smlt0399 of Stenotrophomonas maltophilia (strain K279a).